The following is a 332-amino-acid chain: Anthranilate phosphoribosyltransferase (332 aa).

5-phospho-alpha-D-ribose 1-diphosphate-binding positions include G78, 81–82 (GD), T86, 88–91 (NVST), 106–114 (KHGNRAASS), and A118. G78 lines the anthranilate pocket. S90 serves as a coordination point for Mg(2+). N109 lines the anthranilate pocket. Residue R164 participates in anthranilate binding. 2 residues coordinate Mg(2+): D223 and E224.

This sequence belongs to the anthranilate phosphoribosyltransferase family. Homodimer. Mg(2+) is required as a cofactor.

The enzyme catalyses N-(5-phospho-beta-D-ribosyl)anthranilate + diphosphate = 5-phospho-alpha-D-ribose 1-diphosphate + anthranilate. It functions in the pathway amino-acid biosynthesis; L-tryptophan biosynthesis; L-tryptophan from chorismate: step 2/5. Its function is as follows. Catalyzes the transfer of the phosphoribosyl group of 5-phosphorylribose-1-pyrophosphate (PRPP) to anthranilate to yield N-(5'-phosphoribosyl)-anthranilate (PRA). The polypeptide is Anthranilate phosphoribosyltransferase (Sphingopyxis alaskensis (strain DSM 13593 / LMG 18877 / RB2256) (Sphingomonas alaskensis)).